Here is a 111-residue protein sequence, read N- to C-terminus: Nucleoid-associated protein glr3498 (111 aa).

Belongs to the YbaB/EbfC family. Homodimer.

The protein localises to the cytoplasm. It is found in the nucleoid. Binds to DNA and alters its conformation. May be involved in regulation of gene expression, nucleoid organization and DNA protection. The chain is Nucleoid-associated protein glr3498 from Gloeobacter violaceus (strain ATCC 29082 / PCC 7421).